Reading from the N-terminus, the 1322-residue chain is Phosphoribosylformylglycinamidine synthase (1322 aa).

ATP is bound by residues 307 to 318 (GASTGSGGEIRD) and A678. 3 residues coordinate Mg(2+): E718, N722, and D886. A Glutamine amidotransferase type-1 domain is found at 1069-1322 (MAILREQGVN…MFRNARVNLG (254 aa)). C1162 serves as the catalytic Nucleophile. Catalysis depends on residues H1287 and E1289.

In the N-terminal section; belongs to the FGAMS family. In terms of assembly, monomer.

It localises to the cytoplasm. It carries out the reaction N(2)-formyl-N(1)-(5-phospho-beta-D-ribosyl)glycinamide + L-glutamine + ATP + H2O = 2-formamido-N(1)-(5-O-phospho-beta-D-ribosyl)acetamidine + L-glutamate + ADP + phosphate + H(+). Its pathway is purine metabolism; IMP biosynthesis via de novo pathway; 5-amino-1-(5-phospho-D-ribosyl)imidazole from N(2)-formyl-N(1)-(5-phospho-D-ribosyl)glycinamide: step 1/2. Its function is as follows. Phosphoribosylformylglycinamidine synthase involved in the purines biosynthetic pathway. Catalyzes the ATP-dependent conversion of formylglycinamide ribonucleotide (FGAR) and glutamine to yield formylglycinamidine ribonucleotide (FGAM) and glutamate. The chain is Phosphoribosylformylglycinamidine synthase from Photobacterium profundum (strain SS9).